The primary structure comprises 276 residues: Undecaprenyl-diphosphatase (276 aa).

The next 8 helical transmembrane spans lie at 1-21 (MELY…FLPV), 40-60 (ALSF…LVFF), 93-113 (VRLA…GLIL), 120-140 (LFSS…FLWL), 154-174 (IGFG…IPGI), 199-219 (FLLS…ESFA), 227-247 (VTLL…VALL), and 255-275 (FYLF…AGFV).

Belongs to the UppP family.

It localises to the cell inner membrane. It carries out the reaction di-trans,octa-cis-undecaprenyl diphosphate + H2O = di-trans,octa-cis-undecaprenyl phosphate + phosphate + H(+). In terms of biological role, catalyzes the dephosphorylation of undecaprenyl diphosphate (UPP). Confers resistance to bacitracin. This is Undecaprenyl-diphosphatase from Desulforapulum autotrophicum (strain ATCC 43914 / DSM 3382 / VKM B-1955 / HRM2) (Desulfobacterium autotrophicum).